A 473-amino-acid chain; its full sequence is Tyrosine phenol-lyase (473 aa).

Lys257 carries the post-translational modification N6-(pyridoxal phosphate)lysine.

This sequence belongs to the beta-eliminating lyase family. Homotetramer. Requires pyridoxal 5'-phosphate as cofactor.

It carries out the reaction L-tyrosine + H2O = phenol + pyruvate + NH4(+). The polypeptide is Tyrosine phenol-lyase (Intrasporangium calvum (strain ATCC 23552 / DSM 43043 / JCM 3097 / NBRC 12989 / NCIMB 10167 / NRRL B-3866 / 7 KIP)).